Reading from the N-terminus, the 790-residue chain is LPS-assembly protein LptD (790 aa).

The signal sequence occupies residues 1–20; it reads MRMLRWLILSAFSVAGAVQA.

It belongs to the LptD family. In terms of assembly, component of the lipopolysaccharide transport and assembly complex. Interacts with LptE and LptA.

The protein localises to the cell outer membrane. Its function is as follows. Together with LptE, is involved in the assembly of lipopolysaccharide (LPS) at the surface of the outer membrane. The polypeptide is LPS-assembly protein LptD (Bordetella parapertussis (strain 12822 / ATCC BAA-587 / NCTC 13253)).